The chain runs to 137 residues: Large ribosomal subunit protein uL16 (137 aa).

Belongs to the universal ribosomal protein uL16 family. Part of the 50S ribosomal subunit.

In terms of biological role, binds 23S rRNA and is also seen to make contacts with the A and possibly P site tRNAs. The chain is Large ribosomal subunit protein uL16 from Streptococcus suis (strain 98HAH33).